Consider the following 199-residue polypeptide: uncharacterized protein (199 aa).

Helical transmembrane passes span leucine 27–alanine 47, leucine 55–leucine 75, and leucine 172–leucine 192.

The protein resides in the cell membrane. This is an uncharacterized protein from Synechocystis sp. (strain ATCC 27184 / PCC 6803 / Kazusa).